The chain runs to 538 residues: MYNNNSSTSSDSSNSEEKANAQHASSTDSTSEHTDPAVADEGFPAEQYQSADLEKQQLLIEEGPGGFPYITNPERFYVSLEPSDPRLAVNWPTHVKILHVALLAFTTLTASWGSSVFSAAATIFAAKYHIGLTVALLGMSLYVCGFASGPILWAPISELVGRKIPLIVGMFMFSIFSIAVAVAKDVQTVMICRFFSGFCASSPLSVVAAAFADMFDNKTRGPAVCIFACITFAGPLIGPIAGGFLAKSYLGWRWTEYITSFMGFFSTLCLLFMKECYSRTITEQEAARLRVEYNNNFIRAKSEEEYIDFKALAKRYLAVPFVLLFCEPIVFLLTLYMSFVYGILYLLLEAYPIIFAEKRHFSLGVDALPYIGLLVGVILGAALIAYFQGYYNRKLDANGGKPVPEARLPPMMIGSVLFPAGIFWLAWSGYYTHVHWIVPTLSGLLTGCGILTIFMQSLIYLIDAYLFRAASVIAANTIMRSLVAAGFPLFAVQMFHNMGIGWAGSLLGFIATALIPIPTLFFIFGKRIRLMSKNTVNL.

Low complexity predominate over residues 1–13; it reads MYNNNSSTSSDSS. Residues 1–43 form a disordered region; that stretch reads MYNNNSSTSSDSSNSEEKANAQHASSTDSTSEHTDPAVADEGF. 12 consecutive transmembrane segments (helical) span residues 97–117, 134–154, 163–183, 194–214, 226–246, 254–274, 328–348, 367–387, 408–428, 434–454, 458–478, and 504–524; these read ILHV…SSVF, VALL…ILWA, KIPL…VAVA, FFSG…FADM, IFAC…GFLA, WTEY…LFMK, PIVF…YLLL, ALPY…IAYF, LPPM…LAWS, VHWI…LTIF, LIYL…ANTI, and GSLL…FFIF.

It belongs to the major facilitator superfamily. CAR1 family.

The protein localises to the endoplasmic reticulum. Its subcellular location is the membrane. This is an uncharacterized protein from Schizosaccharomyces pombe (strain 972 / ATCC 24843) (Fission yeast).